The chain runs to 663 residues: MAGAAALRRSARRVVLPGAYALSRALQHPERLLSSQASPDRGGVLGSELGLYPPERVRNFSIIAHVDHGKSTLADRLLELTGTIKKGHGQPQYLDKLQVERERGITVKAQTATMFYRHANNQLPASDQPDAPSYLLNLIDTPGHVDFSYEVSRSLAACQGALLVVDAAQGVQAQTIANFYLAFESNLSIIPVINKIDQPTADPDNVKAQLKRLFDIDPSEALLTSAKTGQGLSQVLPAVIERIPSPPGKCDSPVRMLLLDSYYDEYKGVICHVAVVDGALHKGDKIASAATGRTYEVLDVGIMHPELTPTGVLYTGQVGYVISGMRSTKEARIGDTLHQAKSIVEPLPGFKPARHMVFSGLYPADGSDFDALSHAIEKLTCNDASVSVTKETSTALGMGFRCGFLGLLHMDVFHQRLEQEHGAQVISTIPTVPYIFEYGDGSKVQVENPAALASNPGKRIAACWEPTVIATIIIPSEYVGPVIMLCSERRGEQQEYTFIDAQRALLKYRLPLREIIVDFYNELKSITSGYATFDYEDSEYQQSDLVKMDILLNGQPVDAMATIVHNQKAQRVGRELVDKLKKFIERQMFEITIQAAVGSKVIARETLSAMRKNVLAKCYGGDITRKKKLLEKQKEGKKRMKRVGSVDIPQEAFHELLKVSNSK.

A mitochondrion-targeting transit peptide spans 1–33; the sequence is MAGAAALRRSARRVVLPGAYALSRALQHPERLL. The tr-type G domain maps to 55–247; it reads ERVRNFSIIA…AVIERIPSPP (193 aa). GTP-binding positions include 64 to 71, 140 to 144, and 194 to 197; these read AHVDHGKS, DTPGH, and NKID.

This sequence belongs to the TRAFAC class translation factor GTPase superfamily. Classic translation factor GTPase family. LepA subfamily.

It is found in the mitochondrion inner membrane. The catalysed reaction is GTP + H2O = GDP + phosphate + H(+). Functionally, promotes mitochondrial protein synthesis. May act as a fidelity factor of the translation reaction, by catalyzing a one-codon backward translocation of tRNAs on improperly translocated ribosomes. Binds to mitochondrial ribosomes in a GTP-dependent manner. The sequence is that of Translation factor GUF1 homolog, mitochondrial from Oryza sativa subsp. japonica (Rice).